We begin with the raw amino-acid sequence, 145 residues long: Deoxyuridine 5'-triphosphate nucleotidohydrolase (145 aa).

Residues 64–66 (RSG), asparagine 77, 81–83 (TID), and methionine 91 contribute to the substrate site.

This sequence belongs to the dUTPase family. Mg(2+) is required as a cofactor.

It carries out the reaction dUTP + H2O = dUMP + diphosphate + H(+). It participates in pyrimidine metabolism; dUMP biosynthesis; dUMP from dCTP (dUTP route): step 2/2. Functionally, this enzyme is involved in nucleotide metabolism: it produces dUMP, the immediate precursor of thymidine nucleotides and it decreases the intracellular concentration of dUTP so that uracil cannot be incorporated into DNA. The chain is Deoxyuridine 5'-triphosphate nucleotidohydrolase from Leptospira interrogans serogroup Icterohaemorrhagiae serovar copenhageni (strain Fiocruz L1-130).